Reading from the N-terminus, the 702-residue chain is Ribosomal RNA large subunit methyltransferase K/L (702 aa).

The region spanning 43 to 154 (LIYQSLMWSR…KETASIALDL (112 aa)) is the THUMP domain.

This sequence belongs to the methyltransferase superfamily. RlmKL family.

It localises to the cytoplasm. It catalyses the reaction guanosine(2445) in 23S rRNA + S-adenosyl-L-methionine = N(2)-methylguanosine(2445) in 23S rRNA + S-adenosyl-L-homocysteine + H(+). The enzyme catalyses guanosine(2069) in 23S rRNA + S-adenosyl-L-methionine = N(2)-methylguanosine(2069) in 23S rRNA + S-adenosyl-L-homocysteine + H(+). Specifically methylates the guanine in position 2445 (m2G2445) and the guanine in position 2069 (m7G2069) of 23S rRNA. This chain is Ribosomal RNA large subunit methyltransferase K/L, found in Salmonella agona (strain SL483).